The sequence spans 235 residues: Homeobox-leucine zipper protein ATHB-12 (235 aa).

Residues 27–86 constitute a DNA-binding region (homeobox); the sequence is KSNNQKRFSEEQIKSLELIFESETRLEPRKKVQVARELGLQPRQVAIWFQNKRARWKTKQ. Residues 87-122 are leucine-zipper; the sequence is LEKEYNTLRANYNNLASQFEIMKKEKQSLVSELQRL. Basic and acidic residues-rich tracts occupy residues 128–138 and 152–162; these read RPKEEKHHECC and HNGKSEPEGRL. Residues 128–167 are disordered; it reads RPKEEKHHECCGDQGLALSSSTESHNGKSEPEGRLDQGSV.

The protein belongs to the HD-ZIP homeobox family. Class I subfamily. Interacts with TFIIB1. Widely expressed.

Its subcellular location is the nucleus. Its function is as follows. Probable transcription activator that may act as growth regulators in response to water deficit. This is Homeobox-leucine zipper protein ATHB-12 (ATHB-12) from Arabidopsis thaliana (Mouse-ear cress).